Consider the following 62-residue polypeptide: Large ribosomal subunit protein bL28 (62 aa).

The tract at residues 1-26 (MARKCYVTGKSPKSGNNRSHALNKTK) is disordered. Residues 11 to 20 (SPKSGNNRSH) are compositionally biased toward polar residues.

It belongs to the bacterial ribosomal protein bL28 family.

The chain is Large ribosomal subunit protein bL28 from Exiguobacterium sibiricum (strain DSM 17290 / CCUG 55495 / CIP 109462 / JCM 13490 / 255-15).